Reading from the N-terminus, the 167-residue chain is Ribosome maturation factor RimM (167 aa).

Positions 94–165 (EHEYYYSDII…TIKITPMEGL (72 aa)) constitute a PRC barrel domain.

Belongs to the RimM family. Binds ribosomal protein uS19.

The protein localises to the cytoplasm. Functionally, an accessory protein needed during the final step in the assembly of 30S ribosomal subunit, possibly for assembly of the head region. Essential for efficient processing of 16S rRNA. May be needed both before and after RbfA during the maturation of 16S rRNA. It has affinity for free ribosomal 30S subunits but not for 70S ribosomes. This Staphylococcus epidermidis (strain ATCC 35984 / DSM 28319 / BCRC 17069 / CCUG 31568 / BM 3577 / RP62A) protein is Ribosome maturation factor RimM.